A 1749-amino-acid chain; its full sequence is Intraflagellar transport protein 172 homolog (1749 aa).

At M1 the chain carries N-acetylmethionine. A Glycyl lysine isopeptide (Lys-Gly) (interchain with G-Cter in SUMO1) cross-link involves residue K4. 9 WD repeats span residues 14–53, 64–103, 110–148, 150–191, 195–233, 238–278, 284–323, 483–520, and 521–559; these read DGAA…RDKF, RKSY…GDKK, IQTS…SSTI, GTES…ESQG, NHPC…QTFD, PQER…WEEA, ANLY…SIYK, SHES…CSKT, and MILN…ERVT. The stretch at 593–624 is one TPR 1 repeat; that stretch reads DEGLIEFGTAIDDGNYTRATAFLETLEMTPET. Omega-N-methylarginine is present on R672. TPR repeat units lie at residues 692-725, 809-842, 854-887, 912-945, 947-970, 971-1004, 1042-1075, 1142-1175, 1276-1309, 1345-1378, 1411-1445, 1447-1477, and 1574-1607; these read EKNY…EECI, GELY…MKAV, VRLE…IKAI, SKYY…KDAI, MYTQ…PEDV, SVLY…DLAI, EGRL…EEAY, PEIH…KEAV, VEGL…GSSG, IGKH…NKAK, GVDV…LHKY, ALYA…NPQN, and DKAF…TDAI.

It belongs to the IFT172 family. In terms of assembly, interacts with IFT88. Interacts with IFT57. Interacts with RABL2/RABL2A; binds preferentially to GDP-bound RABL2. As to expression, co-localizes with RABL2/RABL2A in the midpiece of elongated spermatids within the testis (at protein level). Expressed in the flagellum of elongated spermatids and sperm in the testis lumen (at protein level).

It localises to the cell projection. It is found in the cilium. Functionally, required for the maintenance and formation of cilia. Plays an indirect role in hedgehog (Hh) signaling, cilia being required for all activity of the hedgehog pathway. The polypeptide is Intraflagellar transport protein 172 homolog (Ift172) (Mus musculus (Mouse)).